We begin with the raw amino-acid sequence, 513 residues long: Histidine ammonia-lyase (513 aa).

A cross-link (5-imidazolinone (Ala-Gly)) is located at residues A144–G146. The residue at position 145 (S145) is a 2,3-didehydroalanine (Ser).

Belongs to the PAL/histidase family. In terms of processing, contains an active site 4-methylidene-imidazol-5-one (MIO), which is formed autocatalytically by cyclization and dehydration of residues Ala-Ser-Gly.

Its subcellular location is the cytoplasm. The catalysed reaction is L-histidine = trans-urocanate + NH4(+). It functions in the pathway amino-acid degradation; L-histidine degradation into L-glutamate; N-formimidoyl-L-glutamate from L-histidine: step 1/3. The chain is Histidine ammonia-lyase from Streptococcus pyogenes serotype M3 (strain ATCC BAA-595 / MGAS315).